Here is a 561-residue protein sequence, read N- to C-terminus: Arginine--tRNA ligase (561 aa).

The 'HIGH' region signature appears at 128 to 138; the sequence is ANPTGPLHVGH.

This sequence belongs to the class-I aminoacyl-tRNA synthetase family. As to quaternary structure, monomer.

It localises to the cytoplasm. It carries out the reaction tRNA(Arg) + L-arginine + ATP = L-arginyl-tRNA(Arg) + AMP + diphosphate. This chain is Arginine--tRNA ligase, found in Leptothrix cholodnii (strain ATCC 51168 / LMG 8142 / SP-6) (Leptothrix discophora (strain SP-6)).